Consider the following 253-residue polypeptide: Exosome complex component Rrp4 (253 aa).

The S1 motif domain maps to 80 to 153 (GDIVIGIVVD…SRGPILTVQD (74 aa)).

The protein belongs to the RRP4 family. Component of the archaeal exosome complex. Forms a trimer of Rrp4 and/or Csl4 subunits. The trimer associates with a hexameric ring-like arrangement composed of 3 Rrp41-Rrp42 heterodimers.

It is found in the cytoplasm. In terms of biological role, non-catalytic component of the exosome, which is a complex involved in RNA degradation. Increases the RNA binding and the efficiency of RNA degradation. Confers strong poly(A) specificity to the exosome. The polypeptide is Exosome complex component Rrp4 (Ignisphaera aggregans (strain DSM 17230 / JCM 13409 / AQ1.S1)).